Here is a 338-residue protein sequence, read N- to C-terminus: MPKNDLLLRSLRGEPIGRFPVWLMRQAGRYMPEYRKIRNRVKNFLELCKNVDLATEISLLPLKILGVDAIIIFSDILVPLEPLGVKVEFVEGEGPKLSWSGKVSDLKKYDPSQNAYVYEIIKRVKEAQDEVPVIGFAGAPFTLLSYLIEGGASKDFKSTKLFMWENPKEYKRLMDILTETVLAYLKEQIKAGADVVQIFDSWVNNLSLEDYGEYVYPYVNYLISELKDFSDTPVIYFFRGSSSFIDLAVDYRADALSVDWSVDIPELFKIYDKGFQGNLEPAVLYASEEVIEEKTLGLLRRIPVKTRYVFNLGHGLAPDMELEKVKYLVDLVKSFPLT.

Substrate is bound by residues 25-29 (RQAGR), Phe-44, Asp-75, Tyr-146, Ser-201, and His-314.

The protein belongs to the uroporphyrinogen decarboxylase family. As to quaternary structure, homodimer.

The protein localises to the cytoplasm. The catalysed reaction is uroporphyrinogen III + 4 H(+) = coproporphyrinogen III + 4 CO2. It participates in porphyrin-containing compound metabolism; protoporphyrin-IX biosynthesis; coproporphyrinogen-III from 5-aminolevulinate: step 4/4. Its function is as follows. Catalyzes the decarboxylation of four acetate groups of uroporphyrinogen-III to yield coproporphyrinogen-III. The chain is Uroporphyrinogen decarboxylase from Aquifex aeolicus (strain VF5).